A 258-amino-acid polypeptide reads, in one-letter code: MLRFSANLSMLFGEYDFLARFEKAAQCGFRGVEFMFPYDYDIEELKHVLASNKLEHTLHNLPAGDWAAGERGIACIPGREEEFRDGVAAAIRYARALGNKKINCLVGKTPAGFSSEQIHATLVENLRYAANMLMKEDILLLIEPINHFDIPGFHLTGTRQALKLIDDVGCCNLKIQYDIYHMQRMEGELTNTMTQWADKIGHLQIADNPHRGEPGTGEINYDYLFKVIENSDYNGWVGCEYKPQTTTEAGLRWMDPYR.

Catalysis depends on proton donor/acceptor residues E143 and E240.

Belongs to the hyi family. Homodimer.

It carries out the reaction 3-hydroxypyruvate = 2-hydroxy-3-oxopropanoate. With respect to regulation, not stimulated by addition of pyridoxal 5'-phosphate (0.1 mM), FAD, NAD(+), NADP(+) or ATP (1 mM each). EDTA (10 mM) and metal ions (1 mM) such as Ca(2+), Co(2+), Mg(2+), Ni(2+), Zn(2+) do not affect the enzyme activity. Its function is as follows. Catalyzes the reversible isomerization between hydroxypyruvate and 2-hydroxy-3-oxopropanoate (also termed tartronate semialdehyde). Does not catalyze the isomerization of D-fructose to D-glucose or that of D-xylulose to D-xylose. Also does not catalyze racemization of serine, alanine, glycerate or lactate. This is Hydroxypyruvate isomerase (hyi) from Escherichia coli (strain K12).